Consider the following 417-residue polypeptide: Zinc finger CCCH domain-containing protein ZFN-like (417 aa).

2 C3H1-type zinc fingers span residues 31 to 58 (PGEP…HPPN) and 75 to 103 (RLGQ…HPKD). The segment at 121–149 (RPNESERAYYLRTGQCKFGNTCKFHHPQP) adopts a C3H1-type 3; degenerate zinc-finger fold. 2 C3H1-type zinc fingers span residues 278–306 (RPDQ…HPRE) and 324–352 (RPGE…HPMG). The disordered stretch occupies residues 383 to 417 (SSEGLVESGTAKPRRLSLSETRPIPPGDDNIDDEG).

The protein resides in the nucleus. The sequence is that of Zinc finger CCCH domain-containing protein ZFN-like from Pisum sativum (Garden pea).